Consider the following 122-residue polypeptide: Biogenesis of lysosome-related organelles complex 1 subunit CNL1 (122 aa).

Over residues 1-10 (MQDNSSHSRE) the composition is skewed to basic and acidic residues. Residues 1-21 (MQDNSSHSRESASAGDDPLGI) are disordered. Residues 63–95 (ENTIDKNIAKFKELLEKCDTLENHYEMLNQLAI) adopt a coiled-coil conformation.

The protein belongs to the BLOC1S4 family. As to quaternary structure, component of the biogenesis of lysosome-related organelles complex-1 (BLOC-1) composed of at least BLI1, BLS1, CNL1, KXD1, SNN1 and VAB2.

It is found in the cytoplasm. Component of the biogenesis of lysosome-related organelles complex-1 (BLOC-1), a complex that is involved in endosomal cargo sorting. The sequence is that of Biogenesis of lysosome-related organelles complex 1 subunit CNL1 (CLN1) from Saccharomyces cerevisiae (strain RM11-1a) (Baker's yeast).